A 434-amino-acid chain; its full sequence is Fc receptor-like protein 6 (434 aa).

A signal peptide spans 1–19; it reads MLLWTAVLLFVPCVGKTVW. Ig-like C2-type domains follow at residues 20–95, 111–197, and 207–293; these read LYLQ…QTFT, PPVL…PQLE, and PVLT…KKLS. Topologically, residues 20–307 are extracellular; that stretch reads LYLQAWPNPV…QVLFTPASNW (288 aa). Disulfide bonds link Cys39-Cys83, Cys132-Cys180, and Cys228-Cys276. Residue Asn65 is glycosylated (N-linked (GlcNAc...) asparagine). N-linked (GlcNAc...) asparagine glycosylation occurs at Asn273. The chain crosses the membrane as a helical span at residues 308 to 328; sequence LVPWLPASLLGLMVIAAALLV. Residues 329–434 are Cytoplasmic-facing; that stretch reads YVRSWRKAGP…PLSDCEEVLC (106 aa). Residues 369–374 carry the ITIM motif motif; that stretch reads VVYSVV. Tyr371 carries the post-translational modification Phosphotyrosine.

Interacts (tyrosine phosphorylated) with PTPN11. Interacts (tyrosine phosphorylated) with PTPN6, INPP5D, INPPL1 and GRB2. Interacts with class II MHC HLA-DR when the alpha chain is associated with a beta-1, beta-4 or a beta-5 but not a beta-3 chain. In terms of processing, phosphorylated on Tyr residues. Tyrosine phosphorylation induces association with phosphatase PTPN11, PTPN6, INPP5D, INPPL1 and GRB2. In terms of tissue distribution, expressed by cytolytic cells including NK cells, effector and effector-memory CD8(+) T-cells, and a subset of NKT cells (at protein level). Also expressed in gamma delta T cells and in a rare subset of effector CD4(+) T-cells (at protein level). Expressed in spleen, skin, peripheral blood leukocytes, liver, lung, bone marrow, small intestine and placenta. Expression among T-cells is greatly expanded in HIV-1 infected individuals, and includes not only effector and effector-memory CD8(+) T-cells but also populations of CD4(+) T-cells. Expression among CD8(+) T-cells and NK cells is expanded in individuals with chronic lymphocytic leukemia (CLL) but is reduced in PBMCs from patients with acute (AML), chronic myeloid leukemia (CML) and non-Hodgkin's lymphoma. Expression is higher in PBMCs and/or CD3(+) cells of patients with autoimmune diseases, such as rheumatoid arthritis (RA), systemic lupus erythematosus (SLE) and idiopathic thrombocytopenia purpura (ITP). In contrast, expression in CD3(+) cells from patients with lupus anticoagulans (LA) is higher.

The protein localises to the cell membrane. Acts as a MHC class II receptor. When stimulated on its own, does not play a role in cytokine production or the release of cytotoxic granules by NK cells and cytotoxic CD8(+) T cells. Does not act as an Fc receptor. The protein is Fc receptor-like protein 6 (FCRL6) of Homo sapiens (Human).